We begin with the raw amino-acid sequence, 566 residues long: E3 ubiquitin-protein ligase Rnf220 (566 aa).

Lys-277 participates in a covalent cross-link: Glycyl lysine isopeptide (Lys-Gly) (interchain with G-Cter in SUMO2). The interval 277–300 (KREGDSPTASPHSSATEDLHHSDR) is disordered. The span at 291–300 (ATEDLHHSDR) shows a compositional bias: basic and acidic residues. Residue Ser-390 is modified to Phosphoserine. Positions 485 to 513 (EESAVTTFEALKARVRELERQLSRGDRYK) form a coiled coil. The tract at residues 514-522 (CLICMDSYS) is required for targeting to the cytoplasm. Residues 514–553 (CLICMDSYSMPLTSIQCWHVHCEECWLRTLGAKKLCPQCN) form an RING-type zinc finger.

Interacts with SIN3B. Interacts with CTNNB1 (via Armadillo repeats 2-8). Interacts with USP7 (via MATH domain). Post-translationally, auto-ubiquitinated; leads to proteasomal degradation. As to expression, in the brain, expressed in the hippocampus, telenecephalon and cerebellum. No expression in astro glial cells or in neural progenitor cells.

The protein resides in the cytoplasm. Its subcellular location is the nucleus. It catalyses the reaction S-ubiquitinyl-[E2 ubiquitin-conjugating enzyme]-L-cysteine + [acceptor protein]-L-lysine = [E2 ubiquitin-conjugating enzyme]-L-cysteine + N(6)-ubiquitinyl-[acceptor protein]-L-lysine.. It functions in the pathway protein modification; protein ubiquitination. In terms of biological role, E3 ubiquitin-protein ligase that promotes the ubiquitination and proteasomal degradation of SIN3B. Independently of its E3 ligase activity, acts as a CTNNB1 stabilizer through USP7-mediated deubiquitination of CTNNB1 and promotes Wnt signaling. Plays a critical role in the regulation of nuclear lamina. This Mus musculus (Mouse) protein is E3 ubiquitin-protein ligase Rnf220 (Rnf220).